Consider the following 316-residue polypeptide: Protoheme IX farnesyltransferase (316 aa).

9 helical membrane passes run 28–48 (IIPL…KGQV), 50–70 (PLLL…AQTL), 99–119 (HALI…VFFV), 122–142 (LSGF…THLL), 150–170 (IVIG…AVTG), 178–198 (ILFA…ALMI), 223–243 (IWLY…PLAA), 244–264 (CGVV…KKAW), and 293–313 (AMVI…ASLF).

This sequence belongs to the UbiA prenyltransferase family. Protoheme IX farnesyltransferase subfamily.

It is found in the cell inner membrane. The catalysed reaction is heme b + (2E,6E)-farnesyl diphosphate + H2O = Fe(II)-heme o + diphosphate. It functions in the pathway porphyrin-containing compound metabolism; heme O biosynthesis; heme O from protoheme: step 1/1. Its function is as follows. Converts heme B (protoheme IX) to heme O by substitution of the vinyl group on carbon 2 of heme B porphyrin ring with a hydroxyethyl farnesyl side group. This Microcystis aeruginosa (strain NIES-843 / IAM M-2473) protein is Protoheme IX farnesyltransferase.